The chain runs to 340 residues: Heat-inducible transcription repressor HrcA (340 aa).

The protein belongs to the HrcA family.

Negative regulator of class I heat shock genes (grpE-dnaK-dnaJ and groELS operons). Prevents heat-shock induction of these operons. The sequence is that of Heat-inducible transcription repressor HrcA from Burkholderia vietnamiensis (strain G4 / LMG 22486) (Burkholderia cepacia (strain R1808)).